A 513-amino-acid chain; its full sequence is MKLAYWMYAGPAHIGTLRVASSFKNVHAIMHAPLGDDYFNVMRSMLERERDFTPVTASIVDRHVLARGSQEKVVDNIMRKDKEECPDLIVLTPTCTSSILQEDLQNFVDRASISVNSDVILADVNHYRVNELQAADRTLEQIVRYYLDKARRQGKLNQSITDVPSANIIGIFTLGFHNQHDCRELKRLLKDLGIKINQVIPEGGFVEDLEKLPKAWFNLIPYREVGLMTAIYLEKEFGMPYVSITPMGIADIVQCIRQIQKRVNTWTHFLLNQKLDYELYIDQQTRFISQAAWFSRSIDCQNLTGKKAVVFGDATHASSMTKILAQEMGIRVSCAGTYCKHDAEWFEEQVQGFCDEILITDDHTQVGDTIARIEPSAIFGTQMERHIGKRLDIPCGVISSPVHIQNFPLGYRPFLGYEGTNQIADLVYNSFTLGMEDHLLEIFGGHDTKEVITKSLSTDNDLTWNSESQLELNKIPGFVRGKIKRNTERFARQNGITGITVEVMYAAKEALNA.

Aspartate 36 contacts [4Fe-4S] cluster. Aspartate 299 acts as the Proton donor in catalysis. 434 to 435 (GM) contacts substrate.

Belongs to the ChlB/BchB/BchZ family. In terms of assembly, protochlorophyllide reductase is composed of three subunits; ChlL, ChlN and ChlB. Forms a heterotetramer of two ChlB and two ChlN subunits. [4Fe-4S] cluster serves as cofactor.

Its subcellular location is the plastid. It localises to the chloroplast. It carries out the reaction chlorophyllide a + oxidized 2[4Fe-4S]-[ferredoxin] + 2 ADP + 2 phosphate = protochlorophyllide a + reduced 2[4Fe-4S]-[ferredoxin] + 2 ATP + 2 H2O. Its pathway is porphyrin-containing compound metabolism; chlorophyll biosynthesis (light-independent). In terms of biological role, component of the dark-operative protochlorophyllide reductase (DPOR) that uses Mg-ATP and reduced ferredoxin to reduce ring D of protochlorophyllide (Pchlide) to form chlorophyllide a (Chlide). This reaction is light-independent. The NB-protein (ChlN-ChlB) is the catalytic component of the complex. The polypeptide is Light-independent protochlorophyllide reductase subunit B (Anthoceros angustus (Hornwort)).